The chain runs to 1158 residues: Teashirt homolog 1 (1158 aa).

Disordered stretches follow at residues Asp-70–Thr-126, Ile-170–Gly-228, and Thr-310–Gly-341. The span at Leu-76–Asn-88 shows a compositional bias: polar residues. Composition is skewed to low complexity over residues Ser-186–Ser-205 and Ser-213–Gly-228. 2 consecutive C2H2-type zinc fingers follow at residues Phe-288–His-312 and Leu-349–His-373. The span at Thr-310–Lys-326 shows a compositional bias: basic and acidic residues. The interval Pro-405–Thr-425 is disordered. Residues Leu-461 to His-485 form a C2H2-type 3 zinc finger. 3 disordered regions span residues Pro-516–Ser-573, Leu-656–Ser-681, and Val-693–Asp-748. Residues Glu-555–Ser-573 are compositionally biased toward basic and acidic residues. The span at Leu-656–Ser-671 shows a compositional bias: low complexity. Composition is skewed to basic and acidic residues over residues Val-693–Thr-716 and Leu-724–Asp-748. Residues Arg-963–Gly-1033 constitute a DNA-binding region (homeobox). 2 consecutive C2H2-type zinc fingers follow at residues Phe-1048 to His-1070 and Phe-1115 to His-1138.

This sequence belongs to the teashirt C2H2-type zinc-finger protein family.

The protein resides in the nucleus. Its function is as follows. Probable transcriptional regulator involved in developmental processes. May act as a transcriptional repressor (Potential). The chain is Teashirt homolog 1 (tshz1) from Danio rerio (Zebrafish).